The sequence spans 129 residues: MKKQGILNSHLAKIFADLGHTDRVVIADCGLPIPDGVKRVDLSLRIGEPSFLEVLDVVESDLVVERITIAEEILTHNSTIADSLKERYTSIDMCSHEDFKREVAKAKVVIRTGEATPYANVILHAGVIF.

Histidine 20 acts as the Proton donor in catalysis. Substrate is bound by residues aspartate 28, histidine 96, and 118-120 (YAN).

Belongs to the RbsD / FucU family. RbsD subfamily. As to quaternary structure, homodecamer.

It localises to the cytoplasm. It carries out the reaction beta-D-ribopyranose = beta-D-ribofuranose. The protein operates within carbohydrate metabolism; D-ribose degradation; D-ribose 5-phosphate from beta-D-ribopyranose: step 1/2. Its function is as follows. Catalyzes the interconversion of beta-pyran and beta-furan forms of D-ribose. The protein is D-ribose pyranase of Exiguobacterium sp. (strain ATCC BAA-1283 / AT1b).